The following is a 144-amino-acid chain: NADH dehydrogenase [ubiquinone] 1 alpha subcomplex subunit 13 (144 aa).

At alanine 2 the chain carries N-acetylalanine. The helical transmembrane segment at leucine 30–methionine 51 threads the bilayer. Positions proline 102–threonine 144 are important for inducing cell death.

It belongs to the complex I NDUFA13 subunit family. In terms of assembly, complex I is composed of 45 different subunits. Interacts with CARD15, but not with CARD4. Interacts with STAT3, but not with STAT1, STAT2 and STAT5A. Interacts with OLFM4. As to quaternary structure, (Microbial infection) Interacts with HHV-8 IRF1, in the nucleus, with HPV-16 E6 and SV40 LT. As to expression, widely expressed, with highest expression in heart, skeletal muscle, liver, kidney and placenta. In intestinal mucosa, down-regulated in areas involved in Crohn disease and ulcerative colitis.

The protein resides in the mitochondrion inner membrane. The protein localises to the nucleus. In terms of biological role, accessory subunit of the mitochondrial membrane respiratory chain NADH dehydrogenase (Complex I), that is believed not to be involved in catalysis. Complex I functions in the transfer of electrons from NADH to the respiratory chain. The immediate electron acceptor for the enzyme is believed to be ubiquinone. Involved in the interferon/all-trans-retinoic acid (IFN/RA) induced cell death. This apoptotic activity is inhibited by interaction with viral IRF1. Prevents the transactivation of STAT3 target genes. May play a role in CARD15-mediated innate mucosal responses and serve to regulate intestinal epithelial cell responses to microbes. The sequence is that of NADH dehydrogenase [ubiquinone] 1 alpha subcomplex subunit 13 (NDUFA13) from Homo sapiens (Human).